We begin with the raw amino-acid sequence, 142 residues long: Putative nickel-responsive regulator (142 aa).

Histidine 77, histidine 88, histidine 90, and cysteine 96 together coordinate Ni(2+).

The protein belongs to the transcriptional regulatory CopG/NikR family. As to quaternary structure, homotetramer. The cofactor is Ni(2+).

Transcriptional regulator. The protein is Putative nickel-responsive regulator of Halobacterium salinarum (strain ATCC 700922 / JCM 11081 / NRC-1) (Halobacterium halobium).